Consider the following 235-residue polypeptide: Adenosine 5'-phosphosulfate reductase (235 aa).

The [4Fe-4S] cluster site is built by C121, C122, C204, and C207. The active-site Nucleophile; cysteine thiosulfonate intermediate is the C230.

Belongs to the PAPS reductase family. CysH subfamily. Requires [4Fe-4S] cluster as cofactor.

It is found in the cytoplasm. The enzyme catalyses [thioredoxin]-disulfide + sulfite + AMP + 2 H(+) = adenosine 5'-phosphosulfate + [thioredoxin]-dithiol. Its pathway is sulfur metabolism; hydrogen sulfide biosynthesis; sulfite from sulfate. In terms of biological role, catalyzes the formation of sulfite from adenosine 5'-phosphosulfate (APS) using thioredoxin as an electron donor. This chain is Adenosine 5'-phosphosulfate reductase, found in Geobacillus kaustophilus (strain HTA426).